A 178-amino-acid chain; its full sequence is NADPH azoreductase (178 aa).

106 to 111 (GGGKGG) contributes to the NADP(+) binding site.

This sequence belongs to the azoreductase type 2 family. Monomer.

The catalysed reaction is N,N-dimethyl-1,4-phenylenediamine + aniline + 2 NADP(+) = 4-(dimethylamino)azobenzene + 2 NADPH + 2 H(+). Catalyzes the reductive cleavage of azo bond in aromatic azo compounds to the corresponding amines. Requires NADPH as an electron donor for its activity. Compounds with paired naphthalene groups coupled with the azo group are good substrates, with the following preference order: Rocceline &gt; Sumifix Black B &gt; Solar Orange. This Bacillus sp. (strain OY1-2) protein is NADPH azoreductase (azr).